The chain runs to 670 residues: Leucine-rich repeat-containing protein 45 (670 aa).

LRR repeat units follow at residues 87–108, 115–136, 145–166, 173–194, and 201–223; these read TVKS…ALGK, SIRS…FSFF, FLQR…ELAM, SLQE…ALLN, and TLKK…VEQA. Positions 234–645 form a coiled coil; it reads LSETQNRTSV…ISRMKEEEAQ (412 aa).

As to quaternary structure, homomer.

The protein localises to the cytoplasm. It localises to the cytoskeleton. Its subcellular location is the microtubule organizing center. It is found in the centrosome. In terms of biological role, component of the proteinaceous fiber-like linker between two centrioles, required for centrosome cohesion. The protein is Leucine-rich repeat-containing protein 45 (LRRC45) of Gallus gallus (Chicken).